The following is a 324-amino-acid chain: Phospho-N-acetylmuramoyl-pentapeptide-transferase (324 aa).

Helical transmembrane passes span 5–25 (VILF…PIFI), 51–71 (TPTM…IVMI), 77–97 (ISPE…LGFL), 117–137 (LIGQ…YQFA), 147–167 (VSFD…VGGS), 176–196 (LDGL…ILAW), 203–223 (VAIF…FNAH), 227–248 (VFMG…AILT), and 302–322 (VVVT…YIEV).

This sequence belongs to the glycosyltransferase 4 family. MraY subfamily. Requires Mg(2+) as cofactor.

Its subcellular location is the cell membrane. The catalysed reaction is UDP-N-acetyl-alpha-D-muramoyl-L-alanyl-gamma-D-glutamyl-meso-2,6-diaminopimeloyl-D-alanyl-D-alanine + di-trans,octa-cis-undecaprenyl phosphate = di-trans,octa-cis-undecaprenyl diphospho-N-acetyl-alpha-D-muramoyl-L-alanyl-D-glutamyl-meso-2,6-diaminopimeloyl-D-alanyl-D-alanine + UMP. The protein operates within cell wall biogenesis; peptidoglycan biosynthesis. Functionally, catalyzes the initial step of the lipid cycle reactions in the biosynthesis of the cell wall peptidoglycan: transfers peptidoglycan precursor phospho-MurNAc-pentapeptide from UDP-MurNAc-pentapeptide onto the lipid carrier undecaprenyl phosphate, yielding undecaprenyl-pyrophosphoryl-MurNAc-pentapeptide, known as lipid I. The chain is Phospho-N-acetylmuramoyl-pentapeptide-transferase from Bacillus pumilus (strain SAFR-032).